Here is a 352-residue protein sequence, read N- to C-terminus: DNA polymerase IV (352 aa).

The UmuC domain occupies 6-186; that stretch reads IIHIDMDAFY…LPLGKIPGVG (181 aa). Residues aspartate 10 and aspartate 104 each coordinate Mg(2+). The active site involves glutamate 105.

The protein belongs to the DNA polymerase type-Y family. In terms of assembly, monomer. The cofactor is Mg(2+).

It is found in the cytoplasm. The enzyme catalyses DNA(n) + a 2'-deoxyribonucleoside 5'-triphosphate = DNA(n+1) + diphosphate. Its function is as follows. Poorly processive, error-prone DNA polymerase involved in untargeted mutagenesis. Copies undamaged DNA at stalled replication forks, which arise in vivo from mismatched or misaligned primer ends. These misaligned primers can be extended by PolIV. Exhibits no 3'-5' exonuclease (proofreading) activity. May be involved in translesional synthesis, in conjunction with the beta clamp from PolIII. The sequence is that of DNA polymerase IV from Neisseria meningitidis serogroup A / serotype 4A (strain DSM 15465 / Z2491).